Consider the following 901-residue polypeptide: Protein translocase subunit SecA (901 aa).

Residues glutamine 87, 105-109 (GEGKT), and aspartate 512 each bind ATP. Positions 859–901 (HQDDDSAAAAALAAQTGERKVGRNDPCPCGSGKKYKQCHGRLQ) are disordered. Positions 885, 887, 896, and 897 each coordinate Zn(2+). Residues 891–901 (KKYKQCHGRLQ) show a composition bias toward basic residues.

This sequence belongs to the SecA family. In terms of assembly, monomer and homodimer. Part of the essential Sec protein translocation apparatus which comprises SecA, SecYEG and auxiliary proteins SecDF-YajC and YidC. The cofactor is Zn(2+).

The protein resides in the cell inner membrane. It is found in the cytoplasm. It carries out the reaction ATP + H2O + cellular proteinSide 1 = ADP + phosphate + cellular proteinSide 2.. In terms of biological role, part of the Sec protein translocase complex. Interacts with the SecYEG preprotein conducting channel. Has a central role in coupling the hydrolysis of ATP to the transfer of proteins into and across the cell membrane, serving both as a receptor for the preprotein-SecB complex and as an ATP-driven molecular motor driving the stepwise translocation of polypeptide chains across the membrane. The polypeptide is Protein translocase subunit SecA (Escherichia coli O157:H7).